The primary structure comprises 141 residues: Large ribosomal subunit protein uL11 (141 aa).

Belongs to the universal ribosomal protein uL11 family. Part of the ribosomal stalk of the 50S ribosomal subunit. Interacts with L10 and the large rRNA to form the base of the stalk. L10 forms an elongated spine to which L12 dimers bind in a sequential fashion forming a multimeric L10(L12)X complex. One or more lysine residues are methylated.

Functionally, forms part of the ribosomal stalk which helps the ribosome interact with GTP-bound translation factors. In Helicobacter acinonychis (strain Sheeba), this protein is Large ribosomal subunit protein uL11.